A 430-amino-acid chain; its full sequence is MSEGNQPKRVLGLPDVDPSQQDTFETPDPPESISNLADESSELVNESIDRSSLKPAKSHLKFANRKFNNDNEDFSDSIYKKSVPRTGGLLKNQTVFDILPSDESKVETPLQKFQRLQYEVMSFREEMQVIADNGGEVEKDIKGVDLTHQLADLQNQLSHLLENEKLQPILDENKQVIHYSQIQNNSSKKLISEIESFTQQSLSSSTTEQNTQQPSNNNTTTNITSSSSITPNHVTYELFYTGEQSKSQQLQRIQDLEKRLAKLETATGNKTTDSVPITQSILEIKEKLSLLDTTKIDVLQQKMKTVSKEMESLKIQDETSTKALTTNEKKINDIFETMNKWDIVGQQVPAIINRLYTLRSLHEEGISFSNHVSNLEKQQNDITSLLISNSSLMNKMDDSFKSNLLTIKSNIQQLESRIETLQNRQQQQQQ.

2 disordered regions span residues 1 to 51 (MSEG…IDRS) and 201 to 228 (SLSS…SSSS). Residues 32–44 (SISNLADESSELV) show a composition bias toward polar residues. Coiled coils occupy residues 241–319 (TGEQ…QDET) and 397–430 (DDSF…QQQQ).

The protein belongs to the dynactin subunit 2 family. As to quaternary structure, subunit of dynactin, a multiprotein complex associated with dynein.

It localises to the cytoplasm. The protein localises to the cytoskeleton. Its subcellular location is the membrane. Modulates cytoplasmic dynein binding to an organelle, and plays a role in prometaphase chromosome alignment and spindle organization during mitosis. This Dictyostelium discoideum (Social amoeba) protein is Dynactin subunit 2 (dynB).